Here is a 247-residue protein sequence, read N- to C-terminus: ATP synthase subunit a, plastid (247 aa).

5 consecutive transmembrane segments (helical) span residues 33 to 53 (FLVHGQVLITSWVVIAILLGS), 95 to 115 (VPFIGTMFLFIFVSNWSGALL), 134 to 154 (INTTVALALLTSAAYFYAGIL), 199 to 219 (LVVVVLVSLVPSVVPIPVMLL), and 220 to 240 (GLFTSGIQALIFATLAAAYIG).

The protein belongs to the ATPase A chain family. F-type ATPases have 2 components, CF(1) - the catalytic core - and CF(0) - the membrane proton channel. CF(1) has five subunits: alpha(3), beta(3), gamma(1), delta(1), epsilon(1). CF(0) has four main subunits: a, b, b' and c.

It is found in the plastid membrane. In terms of biological role, key component of the proton channel; it plays a direct role in the translocation of protons across the membrane. The chain is ATP synthase subunit a, plastid from Cuscuta exaltata (Tall dodder).